We begin with the raw amino-acid sequence, 166 residues long: Large ribosomal subunit protein uL10 (166 aa).

Belongs to the universal ribosomal protein uL10 family. As to quaternary structure, part of the ribosomal stalk of the 50S ribosomal subunit. The N-terminus interacts with L11 and the large rRNA to form the base of the stalk. The C-terminus forms an elongated spine to which L12 dimers bind in a sequential fashion forming a multimeric L10(L12)X complex.

Forms part of the ribosomal stalk, playing a central role in the interaction of the ribosome with GTP-bound translation factors. This chain is Large ribosomal subunit protein uL10, found in Enterococcus faecalis (strain ATCC 700802 / V583).